The chain runs to 78 residues: MKKQNLIEMEGIVTESLPNAMFRVSLDNGCQVLAHISGKIRRNYIRILPGDKVKVELSPYDLTKGRITYRLRMKTTNG.

Residues 1-72 (MKKQNLIEME…TKGRITYRLR (72 aa)) enclose the S1-like domain.

Belongs to the IF-1 family. As to quaternary structure, component of the 30S ribosomal translation pre-initiation complex which assembles on the 30S ribosome in the order IF-2 and IF-3, IF-1 and N-formylmethionyl-tRNA(fMet); mRNA recruitment can occur at any time during PIC assembly.

Its subcellular location is the plastid. The protein localises to the chloroplast. In terms of biological role, one of the essential components for the initiation of protein synthesis. Stabilizes the binding of IF-2 and IF-3 on the 30S subunit to which N-formylmethionyl-tRNA(fMet) subsequently binds. Helps modulate mRNA selection, yielding the 30S pre-initiation complex (PIC). Upon addition of the 50S ribosomal subunit IF-1, IF-2 and IF-3 are released leaving the mature 70S translation initiation complex. In Chaetosphaeridium globosum (Charophycean green alga), this protein is Translation initiation factor IF-1, chloroplastic.